The primary structure comprises 275 residues: Dermonecrotic toxin LhSicTox-alphaVI1i (275 aa).

The active site involves His-5. Glu-25 and Asp-27 together coordinate Mg(2+). His-41 acts as the Nucleophile in catalysis. Cystine bridges form between Cys-45/Cys-51 and Cys-47/Cys-192. Position 85 (Asp-85) interacts with Mg(2+).

The protein belongs to the arthropod phospholipase D family. Class II subfamily. The cofactor is Mg(2+). Expressed by the venom gland.

Its subcellular location is the secreted. The catalysed reaction is an N-(acyl)-sphingosylphosphocholine = an N-(acyl)-sphingosyl-1,3-cyclic phosphate + choline. It carries out the reaction an N-(acyl)-sphingosylphosphoethanolamine = an N-(acyl)-sphingosyl-1,3-cyclic phosphate + ethanolamine. It catalyses the reaction a 1-acyl-sn-glycero-3-phosphocholine = a 1-acyl-sn-glycero-2,3-cyclic phosphate + choline. The enzyme catalyses a 1-acyl-sn-glycero-3-phosphoethanolamine = a 1-acyl-sn-glycero-2,3-cyclic phosphate + ethanolamine. Functionally, dermonecrotic toxins cleave the phosphodiester linkage between the phosphate and headgroup of certain phospholipids (sphingolipid and lysolipid substrates), forming an alcohol (often choline) and a cyclic phosphate. This toxin acts on sphingomyelin (SM). It may also act on ceramide phosphoethanolamine (CPE), lysophosphatidylcholine (LPC) and lysophosphatidylethanolamine (LPE), but not on lysophosphatidylserine (LPS), and lysophosphatidylglycerol (LPG). It acts by transphosphatidylation, releasing exclusively cyclic phosphate products as second products. Induces dermonecrosis, hemolysis, increased vascular permeability, edema, inflammatory response, and platelet aggregation. This Loxosceles hirsuta (Recluse spider) protein is Dermonecrotic toxin LhSicTox-alphaVI1i.